Consider the following 200-residue polypeptide: Dephospho-CoA kinase (200 aa).

Residues 4-200 (VIGLTGGIAS…VILKNWNIID (197 aa)) enclose the DPCK domain. 12–17 (ASGKST) contributes to the ATP binding site.

This sequence belongs to the CoaE family.

The protein resides in the cytoplasm. The catalysed reaction is 3'-dephospho-CoA + ATP = ADP + CoA + H(+). It functions in the pathway cofactor biosynthesis; coenzyme A biosynthesis; CoA from (R)-pantothenate: step 5/5. Functionally, catalyzes the phosphorylation of the 3'-hydroxyl group of dephosphocoenzyme A to form coenzyme A. This chain is Dephospho-CoA kinase, found in Bacillus cereus (strain ATCC 10987 / NRS 248).